Consider the following 108-residue polypeptide: L-rhamnose mutarotase (108 aa).

Tyr-19 contacts substrate. His-23 functions as the Proton donor in the catalytic mechanism. Residues Tyr-45 and 80–81 (WW) contribute to the substrate site.

The protein belongs to the rhamnose mutarotase family. In terms of assembly, homodimer.

It localises to the cytoplasm. The catalysed reaction is alpha-L-rhamnose = beta-L-rhamnose. The protein operates within carbohydrate metabolism; L-rhamnose metabolism. In terms of biological role, involved in the anomeric conversion of L-rhamnose. This is L-rhamnose mutarotase from Ligilactobacillus salivarius (strain UCC118) (Lactobacillus salivarius).